A 614-amino-acid polypeptide reads, in one-letter code: Maltose permease MAL31 (614 aa).

The segment at 1 to 48 (MKGLSSLINRKKDRNDSHLDEIENGVNATEFNSIEMEEQGKKSDFDLS) is disordered. At 1–108 (MKGLSSLINR…AAAWSLLVST (108 aa)) the chain is on the cytoplasmic side. Residues 38 to 48 (EQGKKSDFDLS) are compositionally biased toward basic and acidic residues. Residues 109–129 (TLIQEGYDTAILGAFYALPVF) form a helical membrane-spanning segment. Topologically, residues 130–144 (QKKYGSLNSNTGDYE) are extracellular. The chain crosses the membrane as a helical span at residues 145 to 165 (ISVSWQIGLCLCYMAGEIVGL). Residues 166 to 180 (QMTGPSVDYMGNRYT) lie on the Cytoplasmic side of the membrane. A helical transmembrane segment spans residues 181–201 (LIMALFFLAAFIFILYFCKSL). Gly-202 is a topological domain (extracellular). The helical transmembrane segment at 203–223 (MIAVGQALCGMPWGCFQCLTV) threads the bilayer. At 224–236 (SYASEICPLALRY) the chain is on the cytoplasmic side. Residues 237 to 257 (YLTTYSNLCWAFGQLFAAGIM) form a helical membrane-spanning segment. Residues 258-272 (KNSQNKYANSELGYK) are Extracellular-facing. A helical membrane pass occupies residues 273-293 (LPFALQWIWPLPLAVGIFFAP). At 294-364 (ESPWWLVKKG…KDGINRRRTR (71 aa)) the chain is on the cytoplasmic side. The chain crosses the membrane as a helical span at residues 365-385 (IACLCWIGQCSCGASLIGYST). Over 386–398 (YFYEKAGVSTDTA) the chain is Extracellular. The helical transmembrane segment at 399-419 (FTFSIIQYCLGIAATFISWWA) threads the bilayer. The Cytoplasmic portion of the chain corresponds to 420 to 427 (SKYCGRFD). A helical transmembrane segment spans residues 428-448 (LYAFGLAFQAIMFFIIGGLGC). The Extracellular segment spans residues 449-460 (SDTHGAKMGSGA). Residues 461 to 481 (LLMVVAFFYNLGIAPVVFCLV) traverse the membrane as a helical segment. Residues 482-493 (SEIPSSRLRTKT) are Cytoplasmic-facing. A helical membrane pass occupies residues 494–514 (IILARNAYNVIQVVVTVLIMY). The Extracellular portion of the chain corresponds to 515 to 526 (QLNSEKWNWGAK). Residues 527 to 547 (SGFFWGGFCLATLAWAVVDLP) traverse the membrane as a helical segment. The Cytoplasmic segment spans residues 548–614 (ETAGRTFIEI…GRNTSSVVNK (67 aa)). The interval 595–614 (EDLETSVVDEGRNTSSVVNK) is disordered.

Belongs to the major facilitator superfamily. Sugar transporter (TC 2.A.1.1) family.

The protein localises to the membrane. High-affinity uptake of maltose and maltotriose. Also transports turanose but not alpha-methylglucoside, melezitose or trehalose. This is Maltose permease MAL31 (MAL31) from Saccharomyces cerevisiae (strain ATCC 204508 / S288c) (Baker's yeast).